We begin with the raw amino-acid sequence, 92 residues long: Small ribosomal subunit protein uS19 (92 aa).

It belongs to the universal ribosomal protein uS19 family.

Functionally, protein S19 forms a complex with S13 that binds strongly to the 16S ribosomal RNA. The sequence is that of Small ribosomal subunit protein uS19 from Staphylococcus aureus (strain Mu3 / ATCC 700698).